A 1101-amino-acid chain; its full sequence is Protein diaphanous homolog 2 (1101 aa).

N-acetylmethionine is present on M1. The interval M1 to L44 is disordered. Over residues G10–R22 the composition is skewed to gly residues. The 367-residue stretch at S98–D464 folds into the GBD/FH3 domain. 2 coiled-coil regions span residues K366–D418 and K487–G547. A compositionally biased stretch (polar residues) spans R536 to S546. 3 disordered regions span residues R536–P594, N1010–K1048, and R1070–K1101. Residues P549–P594 are compositionally biased toward pro residues. An FH1 domain is found at P549–P623. Positions Q628–K1028 constitute an FH2 domain. Residues S903–T1053 are a coiled coil. Composition is skewed to basic and acidic residues over residues N1010–E1035 and R1078–S1090. The DAD domain occupies D1051–D1081.

The protein belongs to the formin homology family. Diaphanous subfamily. In terms of assembly, isoform 3 interacts with RHOD in the GTP-bound form. Expressed in testis, ovary, small intestine, prostate, lung, liver, kidney and leukocytes.

It is found in the cytoplasm. It localises to the cytosol. The protein localises to the early endosome. Could be involved in oogenesis. Involved in the regulation of endosome dynamics. Implicated in a novel signal transduction pathway, in which isoform 3 and CSK are sequentially activated by RHOD to regulate the motility of early endosomes through interactions with the actin cytoskeleton. The polypeptide is Protein diaphanous homolog 2 (DIAPH2) (Homo sapiens (Human)).